The primary structure comprises 1252 residues: Elongator complex protein 1 (1252 aa).

The segment at 814–1252 (VDVNDLYNVA…MMDWQHEILQ (439 aa)) is mediates dimerization. Residue serine 1094 is modified to Phosphoserine. The interval 1097 to 1116 (SSQYSGTSRRTGKTFRSSKN) is disordered. A compositionally biased stretch (basic residues) spans 1106 to 1116 (RTGKTFRSSKN). The tract at residues 1111–1129 (FRSSKNRRKHERKLFSLKP) is required for binding to tRNA.

Belongs to the ELP1/IKA1 family. Homodimer. Component of the elongator complex composed of Elp1, Elp2, Elp3, Elp4, Elp5 and Elp6. The elongator complex associates with and stabilizes microtubules; efficient interaction requires the full complex.

Its subcellular location is the cytoplasm. The protein resides in the nucleus. The protein localises to the cytoskeleton. It is found in the spindle. The protein operates within tRNA modification; 5-methoxycarbonylmethyl-2-thiouridine-tRNA biosynthesis. Component of the elongator complex, which is required for multiple tRNA modifications, including mcm5U (5-methoxycarbonylmethyl uridine), mcm5s2U (5-methoxycarbonylmethyl-2-thiouridine), and ncm5U (5-carbamoylmethyl uridine). The elongator complex catalyzes formation of carboxymethyluridine in the wobble base at position 34 in tRNAs. ELP1 binds to tRNA, mediating interaction of the elongator complex with tRNA. Binding by the elongator complex stabilizes microtubules and promotes their growth. This induces central spindle asymmetry, promoting polarized signaling endosome trafficking during asymmetric cell division and cell fate assignation of sensory organ precursor cells. Involved in protein synthesis-dependent long-term memory formation, probably as part of the elongator complex. The polypeptide is Elongator complex protein 1 (Drosophila melanogaster (Fruit fly)).